Here is a 608-residue protein sequence, read N- to C-terminus: Protein UL27 (608 aa).

Over residues M1–T13 the composition is skewed to pro residues. A disordered region spans residues M1–R33. The segment covering E18 to R33 has biased composition (basic and acidic residues).

The protein belongs to the herpesviridae U4 family. In terms of assembly, interacts with host KAT5, PSME3 and EP400.

It localises to the host nucleus. The protein localises to the host nucleolus. In terms of biological role, promotes a cell cycle arrest in G0/G1 by inducing the proteasomal degradation of host histone acetyltransferase KAT5/Tip60. The polypeptide is Protein UL27 (UL27) (Human cytomegalovirus (strain AD169) (HHV-5)).